The following is a 437-amino-acid chain: Pyrophosphate--fructose 6-phosphate 1-phosphotransferase (437 aa).

A diphosphate-binding site is contributed by glycine 27. Aspartate 122 provides a ligand contact to Mg(2+). Residues threonine 147–aspartate 149, methionine 193–arginine 195, glutamate 261, and tyrosine 323–arginine 326 contribute to the substrate site. Catalysis depends on aspartate 149, which acts as the Proton acceptor.

It belongs to the phosphofructokinase type A (PFKA) family. PPi-dependent PFK group II subfamily. Clade 'Short' sub-subfamily. Homotetramer. Requires Mg(2+) as cofactor. Mn(2+) is required as a cofactor.

The protein resides in the cytoplasm. The catalysed reaction is beta-D-fructose 6-phosphate + diphosphate = beta-D-fructose 1,6-bisphosphate + phosphate + H(+). It participates in carbohydrate degradation; glycolysis; D-glyceraldehyde 3-phosphate and glycerone phosphate from D-glucose: step 3/4. Its activity is regulated as follows. Activated by AMP. Probably promotes oligomerization of the enzyme. Functionally, catalyzes the phosphorylation of D-fructose 6-phosphate, the first committing step of glycolysis. Uses inorganic phosphate (PPi) as phosphoryl donor instead of ATP like common ATP-dependent phosphofructokinases (ATP-PFKs), which renders the reaction reversible, and can thus function both in glycolysis and gluconeogenesis. Consistently, PPi-PFK can replace the enzymes of both the forward (ATP-PFK) and reverse (fructose-bisphosphatase (FBPase)) reactions. This is Pyrophosphate--fructose 6-phosphate 1-phosphotransferase from Naegleria fowleri (Brain eating amoeba).